We begin with the raw amino-acid sequence, 374 residues long: uncharacterized protein (374 aa).

This is an uncharacterized protein from Methanocaldococcus jannaschii (strain ATCC 43067 / DSM 2661 / JAL-1 / JCM 10045 / NBRC 100440) (Methanococcus jannaschii).